We begin with the raw amino-acid sequence, 267 residues long: uncharacterized protein (267 aa).

The ABC transporter domain occupies 2–198 (LGANGAGKTT…FRNKFIVIEG (197 aa)). Residue 3–10 (GANGAGKT) participates in ATP binding.

The protein belongs to the ABC transporter superfamily.

This is an uncharacterized protein from Alkalihalophilus pseudofirmus (strain ATCC BAA-2126 / JCM 17055 / OF4) (Bacillus pseudofirmus).